We begin with the raw amino-acid sequence, 473 residues long: Photosystem II CP43 reaction center protein (473 aa).

Residues 1-14 (MKTLYSLRRFYHVE) constitute a propeptide that is removed on maturation. Threonine 15 is modified (N-acetylthreonine). Threonine 15 is subject to Phosphothreonine. A run of 5 helical transmembrane segments spans residues 69-93 (LFEV…PHLA), 134-155 (LLGP…KDRN), 178-200 (KALY…RKIT), 255-275 (KPFA…LSYS), and 291-312 (WFNN…ASQA). Glutamate 367 is a [CaMn4O5] cluster binding site. A helical transmembrane segment spans residues 447–471 (RARAAAAGFEKGIDRDFEPVLFMTP).

It belongs to the PsbB/PsbC family. PsbC subfamily. In terms of assembly, PSII is composed of 1 copy each of membrane proteins PsbA, PsbB, PsbC, PsbD, PsbE, PsbF, PsbH, PsbI, PsbJ, PsbK, PsbL, PsbM, PsbT, PsbX, PsbY, PsbZ, Psb30/Ycf12, at least 3 peripheral proteins of the oxygen-evolving complex and a large number of cofactors. It forms dimeric complexes. Binds multiple chlorophylls and provides some of the ligands for the Ca-4Mn-5O cluster of the oxygen-evolving complex. It may also provide a ligand for a Cl- that is required for oxygen evolution. PSII binds additional chlorophylls, carotenoids and specific lipids. serves as cofactor.

The protein localises to the plastid. The protein resides in the chloroplast thylakoid membrane. Its function is as follows. One of the components of the core complex of photosystem II (PSII). It binds chlorophyll and helps catalyze the primary light-induced photochemical processes of PSII. PSII is a light-driven water:plastoquinone oxidoreductase, using light energy to abstract electrons from H(2)O, generating O(2) and a proton gradient subsequently used for ATP formation. This chain is Photosystem II CP43 reaction center protein, found in Solanum tuberosum (Potato).